The chain runs to 199 residues: Probable nicotinate-nucleotide adenylyltransferase (199 aa).

This sequence belongs to the NadD family.

The catalysed reaction is nicotinate beta-D-ribonucleotide + ATP + H(+) = deamido-NAD(+) + diphosphate. Its pathway is cofactor biosynthesis; NAD(+) biosynthesis; deamido-NAD(+) from nicotinate D-ribonucleotide: step 1/1. In terms of biological role, catalyzes the reversible adenylation of nicotinate mononucleotide (NaMN) to nicotinic acid adenine dinucleotide (NaAD). The chain is Probable nicotinate-nucleotide adenylyltransferase from Roseiflexus castenholzii (strain DSM 13941 / HLO8).